The sequence spans 150 residues: D-aminoacyl-tRNA deacylase (150 aa).

Residues G133–P134 carry the Gly-cisPro motif, important for rejection of L-amino acids motif.

This sequence belongs to the DTD family. Homodimer.

It localises to the cytoplasm. It carries out the reaction glycyl-tRNA(Ala) + H2O = tRNA(Ala) + glycine + H(+). The enzyme catalyses a D-aminoacyl-tRNA + H2O = a tRNA + a D-alpha-amino acid + H(+). In terms of biological role, an aminoacyl-tRNA editing enzyme that deacylates mischarged D-aminoacyl-tRNAs. Also deacylates mischarged glycyl-tRNA(Ala), protecting cells against glycine mischarging by AlaRS. Acts via tRNA-based rather than protein-based catalysis; rejects L-amino acids rather than detecting D-amino acids in the active site. By recycling D-aminoacyl-tRNA to D-amino acids and free tRNA molecules, this enzyme counteracts the toxicity associated with the formation of D-aminoacyl-tRNA entities in vivo and helps enforce protein L-homochirality. The sequence is that of D-aminoacyl-tRNA deacylase from Kocuria rhizophila (strain ATCC 9341 / DSM 348 / NBRC 103217 / DC2201).